We begin with the raw amino-acid sequence, 729 residues long: Disintegrin and metalloproteinase domain-containing protein 21 (729 aa).

Residues Met-1–Thr-39 form the signal peptide. Positions Gln-40–Pro-209 are excised as a propeptide. An N-linked (GlcNAc...) asparagine glycan is attached at Asn-169. Residues Met-176–Lys-183 carry the Cysteine switch motif. Residue Cys-178 participates in Zn(2+) binding. Over His-210–Arg-685 the chain is Extracellular. The region spanning Trp-212 to Pro-402 is the Peptidase M12B domain. Asn-231 is a glycosylation site (N-linked (GlcNAc...) asparagine). Cystine bridges form between Cys-320-Cys-397, Cys-360-Cys-382, and Cys-362-Cys-367. His-345 lines the Zn(2+) pocket. The active site involves Glu-346. The Zn(2+) site is built by His-349 and His-355. 3 N-linked (GlcNAc...) asparagine glycosylation sites follow: Asn-381, Asn-441, and Asn-482. In terms of domain architecture, Disintegrin spans Val-410 to Asp-496. 4 cysteine pairs are disulfide-bonded: Cys-468–Cys-488, Cys-638–Cys-649, Cys-643–Cys-655, and Cys-657–Cys-666. One can recognise an EGF-like domain in the interval Cys-638–Leu-667. A helical transmembrane segment spans residues Val-686–Ile-706. Residues Ala-707–Gly-729 are Cytoplasmic-facing.

The cofactor is Zn(2+). In terms of processing, has no obvious cleavage site for furin endopeptidase, suggesting that the proteolytic processing is regulated. In terms of tissue distribution, highly expressed in Leydig cells. Expressed also in cauda epididymidis, vas deferens, convoluted tubules, kidney and the parietal cells of stomach. Not detected on developing spermatocytes or mature sperm.

It is found in the membrane. May be involved in sperm maturation and/or fertilization. May also be involved in epithelia functions associated with establishing and maintaining gradients of ions or nutrients. This is Disintegrin and metalloproteinase domain-containing protein 21 (Adam21) from Mus musculus (Mouse).